A 447-amino-acid chain; its full sequence is tRNA-2-methylthio-N(6)-dimethylallyladenosine synthase (447 aa).

The 119-residue stretch at 10-128 (KLFCISTYGC…FPEYLHRVLQ (119 aa)) folds into the MTTase N-terminal domain. Residues C19, C55, C89, C165, C169, and C172 each contribute to the [4Fe-4S] cluster site. The Radical SAM core domain occupies 151–382 (RKSDVKAFVT…EAINKKVVIK (232 aa)). The TRAM domain occupies 384–447 (KEYEGKVVEV…PFSLIGEIVE (64 aa)).

This sequence belongs to the methylthiotransferase family. MiaB subfamily. In terms of assembly, monomer. [4Fe-4S] cluster is required as a cofactor.

Its subcellular location is the cytoplasm. The catalysed reaction is N(6)-dimethylallyladenosine(37) in tRNA + (sulfur carrier)-SH + AH2 + 2 S-adenosyl-L-methionine = 2-methylsulfanyl-N(6)-dimethylallyladenosine(37) in tRNA + (sulfur carrier)-H + 5'-deoxyadenosine + L-methionine + A + S-adenosyl-L-homocysteine + 2 H(+). Its function is as follows. Catalyzes the methylthiolation of N6-(dimethylallyl)adenosine (i(6)A), leading to the formation of 2-methylthio-N6-(dimethylallyl)adenosine (ms(2)i(6)A) at position 37 in tRNAs that read codons beginning with uridine. The chain is tRNA-2-methylthio-N(6)-dimethylallyladenosine synthase from Clostridium perfringens (strain SM101 / Type A).